A 111-amino-acid chain; its full sequence is Putative pterin-4-alpha-carbinolamine dehydratase (111 aa).

The protein belongs to the pterin-4-alpha-carbinolamine dehydratase family.

The catalysed reaction is (4aS,6R)-4a-hydroxy-L-erythro-5,6,7,8-tetrahydrobiopterin = (6R)-L-erythro-6,7-dihydrobiopterin + H2O. This is Putative pterin-4-alpha-carbinolamine dehydratase from Marinobacter nauticus (strain ATCC 700491 / DSM 11845 / VT8) (Marinobacter aquaeolei).